The sequence spans 562 residues: Oxygen-dependent choline dehydrogenase (562 aa).

4 to 33 (DYIIIGAGSAGNVLATRLTEDPNTTVLLLE) serves as a coordination point for FAD. The active-site Proton acceptor is the His-473.

This sequence belongs to the GMC oxidoreductase family. It depends on FAD as a cofactor.

It carries out the reaction choline + A = betaine aldehyde + AH2. It catalyses the reaction betaine aldehyde + NAD(+) + H2O = glycine betaine + NADH + 2 H(+). It functions in the pathway amine and polyamine biosynthesis; betaine biosynthesis via choline pathway; betaine aldehyde from choline (cytochrome c reductase route): step 1/1. Functionally, involved in the biosynthesis of the osmoprotectant glycine betaine. Catalyzes the oxidation of choline to betaine aldehyde and betaine aldehyde to glycine betaine at the same rate. In Escherichia coli O45:K1 (strain S88 / ExPEC), this protein is Oxygen-dependent choline dehydrogenase.